Consider the following 922-residue polypeptide: Histidine kinase 5 (922 aa).

Coiled-coil stretches lie at residues M86–K120 and K169–A205. The region spanning T373 to V614 is the Histidine kinase domain. H376 is modified (phosphohistidine; by autocatalysis). 2 disordered regions span residues Y620–D639 and N728–K773. A compositionally biased stretch (low complexity) spans S738–E747. A compositionally biased stretch (basic and acidic residues) spans S761 to K773. A Response regulatory domain is found at K779 to L921. The Mg(2+) site is built by D785, D828, and C830. D828 is modified (4-aspartylphosphate).

Interacts with AHP1, APH2, APH3, APH5 and APH6, but not with APH4. In terms of tissue distribution, present in light-grown but not in etiolated seedlings. Mostly expressed in roots flowers and siliques, and, to a lower extent, in stems and leaves, especially in guard cells.

It is found in the cell membrane. The protein resides in the cytoplasm. It catalyses the reaction ATP + protein L-histidine = ADP + protein N-phospho-L-histidine.. Functions as a histidine kinase and transmits the stress signal to a downstream MAPK cascade. This protein undergoes an ATP-dependent autophosphorylation at a conserved histidine residue in the kinase core, and a phosphoryl group is then transferred to a conserved aspartate residue in the receiver domain. Negative regulator of the ETR1-dependent abscisic acid (ABA) and ethylene signaling pathway that inhibits the root elongation. Promotes stomatal closure. Regulates stomatal opening by integrating multiple signals via hydrogen peroxide H(2)O(2) homeostasis in guard cells in an ABA-independent manner. May contribute to basal defense mechanisms by closing stomata in the presence of bacterial pathogens. Regulates both hormone levels and ROS production in response to stress. Required for full immunity to bacterial pathogen and necrotrophic fungus. This Arabidopsis thaliana (Mouse-ear cress) protein is Histidine kinase 5 (AHK5).